A 252-amino-acid polypeptide reads, in one-letter code: Anamorsin homolog (252 aa).

An N-terminal SAM-like domain region spans residues 1 to 153; sequence MINFSNTLII…AENPDFNKSD (153 aa). Residues 153–166 are linker; the sequence is DDDNNLVSSDEEIY. 4 residues coordinate [2Fe-2S] cluster: Cys-169, Cys-180, Cys-183, and Cys-185. The tract at residues 169-185 is fe-S binding site A; the sequence is CEDKKKVVNRVCDNCTC. Residues Cys-215, Cys-218, Cys-226, and Cys-229 each coordinate [4Fe-4S] cluster. 2 short sequence motifs (cx2C motif) span residues 215-218 and 226-229; these read CGNC and CGSC. The segment at 215-229 is fe-S binding site B; it reads CGNCYLGDAFRCGSC.

The protein belongs to the anamorsin family. As to quaternary structure, monomer. Requires [2Fe-2S] cluster as cofactor. [4Fe-4S] cluster serves as cofactor.

The protein localises to the cytoplasm. The protein resides in the mitochondrion intermembrane space. Component of the cytosolic iron-sulfur (Fe-S) protein assembly (CIA) machinery. Required for the maturation of extramitochondrial Fe-S proteins. Part of an electron transfer chain functioning in an early step of cytosolic Fe-S biogenesis, facilitating the de novo assembly of a [4Fe-4S] cluster on the cytosolic Fe-S scaffold complex. Electrons are transferred from NADPH via a FAD- and FMN-containing diflavin oxidoreductase. Together with the diflavin oxidoreductase, also required for the assembly of the diferric tyrosyl radical cofactor of ribonucleotide reductase (RNR), probably by providing electrons for reduction during radical cofactor maturation in the catalytic small subunit. The chain is Anamorsin homolog (DRE2) from Plasmodium berghei (strain Anka).